Reading from the N-terminus, the 428-residue chain is Adenylosuccinate synthetase (428 aa).

GTP contacts are provided by residues 12-18 (GDEGKGK) and 40-42 (GHT). The active-site Proton acceptor is Asp-13. Mg(2+) is bound by residues Asp-13 and Gly-40. IMP is bound by residues 13 to 16 (DEGK), 38 to 41 (NAGH), Thr-127, Arg-141, Gln-222, Thr-237, and Arg-301. His-41 (proton donor) is an active-site residue. A substrate-binding site is contributed by 297-303 (TVTKRPR). GTP is bound by residues Arg-303, 329 to 331 (CLD), and 411 to 413 (SVG).

This sequence belongs to the adenylosuccinate synthetase family. As to quaternary structure, homodimer. The cofactor is Mg(2+).

It localises to the cytoplasm. The catalysed reaction is IMP + L-aspartate + GTP = N(6)-(1,2-dicarboxyethyl)-AMP + GDP + phosphate + 2 H(+). Its pathway is purine metabolism; AMP biosynthesis via de novo pathway; AMP from IMP: step 1/2. Its function is as follows. Plays an important role in the de novo pathway of purine nucleotide biosynthesis. Catalyzes the first committed step in the biosynthesis of AMP from IMP. The sequence is that of Adenylosuccinate synthetase from Levilactobacillus brevis (strain ATCC 367 / BCRC 12310 / CIP 105137 / JCM 1170 / LMG 11437 / NCIMB 947 / NCTC 947) (Lactobacillus brevis).